The chain runs to 34 residues: Photosystem II reaction center protein M (34 aa).

Residues 5-25 traverse the membrane as a helical segment; sequence ILAFSATALLILFPTALLLIL.

It belongs to the PsbM family. In terms of assembly, PSII is composed of 1 copy each of membrane proteins PsbA, PsbB, PsbC, PsbD, PsbE, PsbF, PsbH, PsbI, PsbJ, PsbK, PsbL, PsbM, PsbT, PsbX, PsbY, PsbZ, Psb30/Ycf12, at least 3 peripheral proteins of the oxygen-evolving complex and a large number of cofactors. It forms dimeric complexes.

Its subcellular location is the plastid membrane. Functionally, one of the components of the core complex of photosystem II (PSII). PSII is a light-driven water:plastoquinone oxidoreductase that uses light energy to abstract electrons from H(2)O, generating O(2) and a proton gradient subsequently used for ATP formation. It consists of a core antenna complex that captures photons, and an electron transfer chain that converts photonic excitation into a charge separation. This subunit is found at the monomer-monomer interface. The chain is Photosystem II reaction center protein M from Cuscuta gronovii (Common dodder).